The sequence spans 284 residues: Bifunctional protein FolD (284 aa).

Residues 166-168 (GAS), Ser191, and Ile232 contribute to the NADP(+) site.

It belongs to the tetrahydrofolate dehydrogenase/cyclohydrolase family. Homodimer.

The catalysed reaction is (6R)-5,10-methylene-5,6,7,8-tetrahydrofolate + NADP(+) = (6R)-5,10-methenyltetrahydrofolate + NADPH. It catalyses the reaction (6R)-5,10-methenyltetrahydrofolate + H2O = (6R)-10-formyltetrahydrofolate + H(+). Its pathway is one-carbon metabolism; tetrahydrofolate interconversion. Catalyzes the oxidation of 5,10-methylenetetrahydrofolate to 5,10-methenyltetrahydrofolate and then the hydrolysis of 5,10-methenyltetrahydrofolate to 10-formyltetrahydrofolate. The polypeptide is Bifunctional protein FolD (Neisseria meningitidis serogroup C (strain 053442)).